The sequence spans 455 residues: Bifunctional protein GlmU (455 aa).

Residues methionine 1–proline 227 are pyrophosphorylase. UDP-N-acetyl-alpha-D-glucosamine is bound by residues leucine 8–glycine 11, lysine 22, glutamine 73, glycine 78–threonine 79, tyrosine 100–aspartate 102, glycine 137, glutamate 152, asparagine 167, and asparagine 225. Aspartate 102 provides a ligand contact to Mg(2+). Mg(2+) is bound at residue asparagine 225. The linker stretch occupies residues valine 228 to glutamine 248. The tract at residues glycine 249–lysine 455 is N-acetyltransferase. The UDP-N-acetyl-alpha-D-glucosamine site is built by arginine 331 and lysine 349. The active-site Proton acceptor is the histidine 361. UDP-N-acetyl-alpha-D-glucosamine is bound by residues tyrosine 364 and asparagine 375. Acetyl-CoA is bound by residues alanine 378, asparagine 384–tyrosine 385, serine 403, alanine 421, and arginine 438. Residues glycine 420–lysine 455 are disordered.

In the N-terminal section; belongs to the N-acetylglucosamine-1-phosphate uridyltransferase family. It in the C-terminal section; belongs to the transferase hexapeptide repeat family. In terms of assembly, homotrimer. Mg(2+) serves as cofactor.

It localises to the cytoplasm. The enzyme catalyses alpha-D-glucosamine 1-phosphate + acetyl-CoA = N-acetyl-alpha-D-glucosamine 1-phosphate + CoA + H(+). It carries out the reaction N-acetyl-alpha-D-glucosamine 1-phosphate + UTP + H(+) = UDP-N-acetyl-alpha-D-glucosamine + diphosphate. It functions in the pathway nucleotide-sugar biosynthesis; UDP-N-acetyl-alpha-D-glucosamine biosynthesis; N-acetyl-alpha-D-glucosamine 1-phosphate from alpha-D-glucosamine 6-phosphate (route II): step 2/2. Its pathway is nucleotide-sugar biosynthesis; UDP-N-acetyl-alpha-D-glucosamine biosynthesis; UDP-N-acetyl-alpha-D-glucosamine from N-acetyl-alpha-D-glucosamine 1-phosphate: step 1/1. It participates in bacterial outer membrane biogenesis; LPS lipid A biosynthesis. Catalyzes the last two sequential reactions in the de novo biosynthetic pathway for UDP-N-acetylglucosamine (UDP-GlcNAc). The C-terminal domain catalyzes the transfer of acetyl group from acetyl coenzyme A to glucosamine-1-phosphate (GlcN-1-P) to produce N-acetylglucosamine-1-phosphate (GlcNAc-1-P), which is converted into UDP-GlcNAc by the transfer of uridine 5-monophosphate (from uridine 5-triphosphate), a reaction catalyzed by the N-terminal domain. The protein is Bifunctional protein GlmU of Acidithiobacillus ferrooxidans (strain ATCC 23270 / DSM 14882 / CIP 104768 / NCIMB 8455) (Ferrobacillus ferrooxidans (strain ATCC 23270)).